The chain runs to 518 residues: UPF0288 protein Mbar_A0706 (518 aa).

Belongs to the UPF0288 family.

The sequence is that of UPF0288 protein Mbar_A0706 from Methanosarcina barkeri (strain Fusaro / DSM 804).